Consider the following 395-residue polypeptide: MGFLELLEVASMPIVQVLLISVLGAFLATDYCSLLSADTRRSVNKLVFVVFTPCIMFANLAETVTLQDIISWWFMPINVGITFLVGGILGWLVVKLLNPKPQLHGLIIATCASGNMGNLMLILVPAICDEEGSPFGNRSVCRSIGLSYASFSMALGGFYIWTYSYQLVRSSATQFRALEAAGLVKSPNKDIDSDPHALLLKPHQNQDLEIQGKQKVSTRTYIKDLLHQILEELFAPPTIGAILGFVFGATNWLRNLIIGENAPLRVIQDSVKLLGEGTIPCITLILGGNLIQGLRSSAVKKSVIVGVIIVRYILLPVVGVGVVQLAGNLGYLPPDPLFRYVLMLQFALPPAMNISTMAQLFDVAQDECSVIFLWTYLVASLALTVWSTIFLSILS.

Topologically, residues 1–8 are lumenal; that stretch reads MGFLELLE. The helical transmembrane segment at 9–29 threads the bilayer; sequence VASMPIVQVLLISVLGAFLAT. Over 30–45 the chain is Cytoplasmic; the sequence is DYCSLLSADTRRSVNK. The helical transmembrane segment at 46–66 threads the bilayer; that stretch reads LVFVVFTPCIMFANLAETVTL. Topologically, residues 67-73 are lumenal; that stretch reads QDIISWW. The helical transmembrane segment at 74 to 94 threads the bilayer; it reads FMPINVGITFLVGGILGWLVV. Over 95–106 the chain is Cytoplasmic; the sequence is KLLNPKPQLHGL. A helical transmembrane segment spans residues 107–127; that stretch reads IIATCASGNMGNLMLILVPAI. The Lumenal portion of the chain corresponds to 128-142; the sequence is CDEEGSPFGNRSVCR. A helical transmembrane segment spans residues 143–163; it reads SIGLSYASFSMALGGFYIWTY. At 164–232 the chain is on the cytoplasmic side; the sequence is SYQLVRSSAT…KDLLHQILEE (69 aa). The helical transmembrane segment at 233–253 threads the bilayer; the sequence is LFAPPTIGAILGFVFGATNWL. The Lumenal segment spans residues 254-272; sequence RNLIIGENAPLRVIQDSVK. The helical transmembrane segment at 273–293 threads the bilayer; sequence LLGEGTIPCITLILGGNLIQG. The Cytoplasmic portion of the chain corresponds to 294 to 302; that stretch reads LRSSAVKKS. A helical membrane pass occupies residues 303 to 323; the sequence is VIVGVIIVRYILLPVVGVGVV. Over 324–340 the chain is Lumenal; sequence QLAGNLGYLPPDPLFRY. Residues 341-361 form a helical membrane-spanning segment; sequence VLMLQFALPPAMNISTMAQLF. At 362–369 the chain is on the cytoplasmic side; sequence DVAQDECS. Residues 370 to 390 traverse the membrane as a helical segment; that stretch reads VIFLWTYLVASLALTVWSTIF. Residues 391 to 395 lie on the Lumenal side of the membrane; the sequence is LSILS.

It belongs to the auxin efflux carrier (TC 2.A.69.2) family. As to expression, expressed in seedlings, rosette and cauline leaves, stems and flowers.

The protein resides in the endoplasmic reticulum membrane. In terms of biological role, involved in cellular auxin homeostasis by regulating auxin metabolism. Regulates intracellular auxin accumulation at the endoplasmic reticulum and thus auxin availability for nuclear auxin signaling. The polypeptide is Protein PIN-LIKES 7 (Arabidopsis thaliana (Mouse-ear cress)).